Reading from the N-terminus, the 257-residue chain is Ribonuclease HII (257 aa).

One can recognise an RNase H type-2 domain in the interval 72-257 (TYIAGIDEVG…FAPIKDMIQK (186 aa)). Positions 78, 79, and 170 each coordinate a divalent metal cation.

This sequence belongs to the RNase HII family. Requires Mn(2+) as cofactor. Mg(2+) serves as cofactor.

The protein localises to the cytoplasm. It carries out the reaction Endonucleolytic cleavage to 5'-phosphomonoester.. Functionally, endonuclease that specifically degrades the RNA of RNA-DNA hybrids. The chain is Ribonuclease HII from Bacillus cereus (strain ATCC 10987 / NRS 248).